We begin with the raw amino-acid sequence, 859 residues long: ATP-dependent RNA helicase DDX24 (859 aa).

Lysine 17 carries the N6-acetyllysine modification. A Phosphoserine modification is found at serine 60. The segment at 61–175 (PAKNPSSLFS…SQSTAAKVPK (115 aa)) is disordered. Lysine 71 is subject to N6-acetyllysine. A phosphoserine mark is found at serine 82 and serine 94. Acidic residues predominate over residues 82 to 91 (SEEEEEEEGE). Residues 95-105 (PKKKIKLKKSK) show a composition bias toward basic residues. The segment covering 106–115 (NVATEGTSTQ) has biased composition (polar residues). The short motif at 192–220 (SAWKDLFVPRPVLRALSFLGFSAPTPIQV) is the Q motif element. The Helicase ATP-binding domain maps to 224–528 (APAIRDKLDI…RILHKKHTKK (305 aa)). 237–244 (AETGSGKT) is a binding site for ATP. Residues 262-374 (NAAPPPSNTE…QTGNLKQELD (113 aa)) form a disordered region. Residues 277-293 (TRPEAGAETRSPGKAEA) show a composition bias toward basic and acidic residues. 2 positions are modified to phosphoserine: serine 287 and serine 295. Positions 294-304 (ESDALPDDTVI) are enriched in acidic residues. A Phosphothreonine modification is found at threonine 302. Lysine 370 participates in a covalent cross-link: Glycyl lysine isopeptide (Lys-Gly) (interchain with G-Cter in SUMO2). Residues 471–474 (DEAD) carry the DEAD box motif. The region spanning 578–723 (YLYYFLMQYP…LFPVQTKYMD (146 aa)) is the Helicase C-terminal domain. Glycyl lysine isopeptide (Lys-Gly) (interchain with G-Cter in SUMO2) cross-links involve residues lysine 624, lysine 808, and lysine 825. Polar residues-rich tracts occupy residues 799–814 (PLFTESQKTKYPTQSG) and 823–834 (PSKSESALSCLS). The segment at 799-859 (PLFTESQKTK…EQPQPSTSAN (61 aa)) is disordered.

This sequence belongs to the DEAD box helicase family. DDX24/MAK5 subfamily. In terms of assembly, interacts with FADD. Interacts with RIPK1; this interaction disrupts RLR signaling activation of IFN-dependent transcription factor IRF7. Interacts with NIP7. Interacts with EP300; this interaction prevents TP53 acetylation mediated by EP300. Ubiquitinated by MDM2 without targeting DDX24 for proteasomal degradation. Instead, polyubiquitylated DDX24 promotes interaction with NIP7, a component of pre-rRNP processing complex, and associates with pre-rRNA molecules and pre-ribosomal particles.

It localises to the cytoplasm. It is found in the nucleus. The enzyme catalyses ATP + H2O = ADP + phosphate + H(+). Its function is as follows. ATP-dependent RNA helicase that plays a role in various aspects of RNA metabolism including pre-mRNA splicing and is thereby involved in different biological processes such as cell cycle regulation or innate immunity. Plays an inhibitory role in TP53 transcriptional activity and subsequently in TP53 controlled cell growth arrest and senescence by inhibiting its EP300 mediated acetylation. Negatively regulates cytosolic RNA-mediated innate immune signaling at least in part by affecting RIPK1/IRF7 interactions. Alternatively, possesses antiviral activity by recognizing gammaherpesvirus transcripts in the context of lytic reactivation. Plays an essential role in cell cycle regulation in vascular smooth muscle cells by interacting with and regulating FANCA (Fanconi anemia complementation group A) mRNA. In Pongo abelii (Sumatran orangutan), this protein is ATP-dependent RNA helicase DDX24 (DDX24).